The primary structure comprises 302 residues: Bifunctional protein FolD (302 aa).

Residues 165-167 (GRS), Ser190, and Ile231 each bind NADP(+).

Belongs to the tetrahydrofolate dehydrogenase/cyclohydrolase family. In terms of assembly, homodimer.

It carries out the reaction (6R)-5,10-methylene-5,6,7,8-tetrahydrofolate + NADP(+) = (6R)-5,10-methenyltetrahydrofolate + NADPH. The enzyme catalyses (6R)-5,10-methenyltetrahydrofolate + H2O = (6R)-10-formyltetrahydrofolate + H(+). It functions in the pathway one-carbon metabolism; tetrahydrofolate interconversion. Catalyzes the oxidation of 5,10-methylenetetrahydrofolate to 5,10-methenyltetrahydrofolate and then the hydrolysis of 5,10-methenyltetrahydrofolate to 10-formyltetrahydrofolate. This chain is Bifunctional protein FolD, found in Prochlorococcus marinus (strain MIT 9313).